Consider the following 271-residue polypeptide: MNSKELTKEVLNLFQTLPEFYFEHFHEYGIWFPIVVGIIASAVGMFGMLLFYAAEPDTEFEKLPFFVRKIASREGDEDTYFALGIYPIIILPAEGKIIKAAAIHEFFHVLFKFPWVIFQPVTGIFMTQLPYRFFNMLTQFLYTVLPKHIVLMLILLSMPILKKFGMEKSQVYELLSLASKYITFVYICALAAVIEELLVNIATAIYFLITFKFNENTFLVTVGSSLTYLSNIPMIFACMWMDFHYADGQGVEMAKKFIELVFKTELSSLFF.

A run of 3 helical transmembrane segments spans residues 30–50 (IWFPIVVGIIASAVGMFGMLL), 189–209 (ALAAVIEELLVNIATAIYFLI), and 218–238 (FLVTVGSSLTYLSNIPMIFAC).

It localises to the cell membrane. This is an uncharacterized protein from Aquifex aeolicus (strain VF5).